Reading from the N-terminus, the 374-residue chain is tRNA (guanine(26)-N(2))-dimethyltransferase (374 aa).

Residues 4 to 368 (IEATEGTTTF…APLPVLYDAI (365 aa)) enclose the Trm1 methyltransferase domain. Arg41, Arg66, Asp82, Asp108, and Ala109 together coordinate S-adenosyl-L-methionine. Zn(2+)-binding residues include Cys237, Cys240, Cys256, and Cys259.

It belongs to the class I-like SAM-binding methyltransferase superfamily. Trm1 family.

It carries out the reaction guanosine(26) in tRNA + 2 S-adenosyl-L-methionine = N(2)-dimethylguanosine(26) in tRNA + 2 S-adenosyl-L-homocysteine + 2 H(+). In terms of biological role, dimethylates a single guanine residue at position 26 of a number of tRNAs using S-adenosyl-L-methionine as donor of the methyl groups. In Methanoregula boonei (strain DSM 21154 / JCM 14090 / 6A8), this protein is tRNA (guanine(26)-N(2))-dimethyltransferase.